Consider the following 856-residue polypeptide: Cyclic di-GMP phosphodiesterase PdeB (856 aa).

Transmembrane regions (helical) follow at residues 7–27 (ILVF…YCLG) and 230–250 (WVSL…YVWL). The 48-residue stretch at 303–350 (QKERGKITLESIAEAVILTDIEAKVIYMNPKAETLLEVASSNAVGESL) folds into the PAS domain. The 134-residue stretch at 454–587 (RSLAVCYLDL…GTNQIHIYDD (134 aa)) folds into the GGDEF domain. Positions 598–852 (APKWAVRIAQ…SYCEQFETRL (255 aa)) constitute an EAL domain.

The protein localises to the cell membrane. The enzyme catalyses 3',3'-c-di-GMP + H2O = 5'-phosphoguanylyl(3'-&gt;5')guanosine + H(+). Affects motility and biofilm formation, and is linked to the regulation of sulfate uptake and assimilation. The protein is Cyclic di-GMP phosphodiesterase PdeB (pdeB) of Shewanella oneidensis (strain ATCC 700550 / JCM 31522 / CIP 106686 / LMG 19005 / NCIMB 14063 / MR-1).